Consider the following 593-residue polypeptide: Polyphenol oxidase, chloroplastic (593 aa).

The segment covering 1–13 has biased composition (low complexity); sequence MTSLSPPVVTTPT. Residues 1-34 form a disordered region; the sequence is MTSLSPPVVTTPTVPNPATKPLSPFSQNNSQVSL. The N-terminal 89 residues, 1–89, are a transit peptide targeting the chloroplast; the sequence is MTSLSPPVVT…GMGTDPFAFA (89 aa). Positions 24 to 34 are enriched in polar residues; that stretch reads PFSQNNSQVSL. 2 cysteine pairs are disulfide-bonded: Cys100–Cys115 and Cys114–Cys176. 6 residues coordinate Cu cation: His175, His196, His205, His327, His331, and His361. Positions 179 to 196 form a cross-link, 2'-(S-cysteinyl)-histidine (Cys-His); that stretch reads CDGAYDQVGFPELELQIH.

It belongs to the tyrosinase family. It depends on Cu(2+) as a cofactor.

Its subcellular location is the plastid. It is found in the chloroplast thylakoid lumen. The enzyme catalyses 2 catechol + O2 = 2 1,2-benzoquinone + 2 H2O. In terms of biological role, catalyzes the oxidation of mono- and o-diphenols to o-diquinones. This is Polyphenol oxidase, chloroplastic from Malus domestica (Apple).